The sequence spans 224 residues: uncharacterized protein (224 aa).

The next 5 membrane-spanning stretches (helical) occupy residues 32-52 (ILTLCQLLSPSMLVLHYPLVV), 60-80 (LFTNYLYAGTGFDFIMNIYFF), 100-120 (IIYLVKVALLIDAFSLISGLG), 130-150 (AIAYNWSLFNSFSKIQFLFGF), and 162-182 (LGFSFLTGGLPSLVVLGFGII).

It belongs to the derlin family.

It is found in the endoplasmic reticulum membrane. This is an uncharacterized protein from Schizosaccharomyces pombe (strain 972 / ATCC 24843) (Fission yeast).